A 382-amino-acid polypeptide reads, in one-letter code: Gap junction alpha-1 protein (382 aa).

Topologically, residues Gly-2–Lys-23 are cytoplasmic. The residue at position 5 (Ser-5) is a Phosphoserine. The chain crosses the membrane as a helical span at residues Val-24–Ala-44. At Trp-45–Arg-76 the chain is on the extracellular side. 2 disulfide bridges follow: Cys-54-Cys-192 and Cys-187-Cys-198. The chain crosses the membrane as a helical span at residues Phe-77–Phe-97. Residues Tyr-98–Tyr-155 lie on the Cytoplasmic side of the membrane. Lys-144 participates in a covalent cross-link: Glycyl lysine isopeptide (Lys-Gly) (interchain with G-Cter in SUMO). The helical transmembrane segment at Ile-156–Ile-176 threads the bilayer. At Tyr-177–Thr-207 the chain is on the extracellular side. The chain crosses the membrane as a helical span at residues Ile-208–Leu-228. Residues Phe-229 to Ile-382 are Cytoplasmic-facing. Lys-237 participates in a covalent cross-link: Glycyl lysine isopeptide (Lys-Gly) (interchain with G-Cter in SUMO). Positions Ser-244–Ile-382 are interaction with NOV. Position 247 is a phosphotyrosine (Tyr-247). Ser-255, Ser-257, and Ser-262 each carry phosphoserine. The segment at Lys-264–Ile-382 is interaction with UBQLN4. Cys-271 carries the S-nitrosocysteine modification. The residue at position 275 (Thr-275) is a Phosphothreonine. Phosphoserine occurs at positions 306 and 314. A compositionally biased stretch (polar residues) spans Gln-317 to Ala-332. Residues Gln-317–Ile-382 are disordered. Ser-325 carries the phosphoserine; by CK1 modification. Thr-326 is modified (phosphothreonine). Phosphoserine; by CK1 occurs at positions 328 and 330. The segment covering Gln-342 to His-351 has biased composition (basic and acidic residues). Ser-344 and Ser-365 each carry phosphoserine. Residues Arg-362 to Arg-374 are compositionally biased toward low complexity. A Phosphoserine; by PKC/PRKCG and PKC/PRKCD modification is found at Ser-368. Ser-369 and Ser-373 each carry phosphoserine.

This sequence belongs to the connexin family. Alpha-type (group II) subfamily. In terms of assembly, a connexon is composed of a hexamer of connexins. Interacts with SGSM3. Interacts with RIC1/CIP150. Interacts with CNST and CSNK1D. Interacts (via C-terminus) with TJP1. Interacts (via C-terminus) with SRC (via SH3 domain). Interacts (not ubiquitinated) with UBQLN4 (via UBA domain). Interacts with NOV. Interacts with TMEM65. Interacts with ANK3/ANKG and PKP2. Phosphorylation at Ser-325, Ser-328 and Ser-330 by CK1 modulates gap junction assembly. Phosphorylated at Ser-368 by PRKCG; phosphorylation induces disassembly of gap junction plaques and inhibition of gap junction activity. Phosphorylation at Ser-368 by PRKCD triggers its internalization into small vesicles leading to proteasome-mediated degradation. Post-translationally, sumoylated with SUMO1, SUMO2 and SUMO3, which may regulate the level of functional Cx43 gap junctions at the plasma membrane. May be desumoylated by SENP1 or SENP2. In terms of processing, S-nitrosylation at Cys-271 is enriched at the muscle endothelial gap junction in arteries, it augments channel permeability and may regulate of smooth muscle cell to endothelial cell communication. Acetylated in the developing cortex; leading to delocalization from the cell membrane.

It is found in the cell membrane. Its subcellular location is the cell junction. The protein localises to the gap junction. It localises to the endoplasmic reticulum. Functionally, gap junction protein that acts as a regulator of bladder capacity. A gap junction consists of a cluster of closely packed pairs of transmembrane channels, the connexons, through which materials of low MW diffuse from one cell to a neighboring cell. May play a critical role in the physiology of hearing by participating in the recycling of potassium to the cochlear endolymph. Negative regulator of bladder functional capacity: acts by enhancing intercellular electrical and chemical transmission, thus sensitizing bladder muscles to cholinergic neural stimuli and causing them to contract. May play a role in cell growth inhibition through the regulation of NOV expression and localization. Plays an essential role in gap junction communication in the ventricles. This chain is Gap junction alpha-1 protein (GJA1), found in Sus scrofa (Pig).